A 459-amino-acid chain; its full sequence is F-box protein At1g47340 (459 aa).

Residues 31–76 form the F-box domain; it reads FMVSVSLPKELILEILKRLPAKSVKRFHCVSKQWASMLSCPHFREL. The tract at residues 434 to 459 is disordered; it reads AKIEWEEEEEEDEDEDQEKEEEDQWS. The segment covering 438-459 has biased composition (acidic residues); that stretch reads WEEEEEEDEDEDQEKEEEDQWS.

This Arabidopsis thaliana (Mouse-ear cress) protein is F-box protein At1g47340.